The chain runs to 1263 residues: DNA-directed RNA polymerase subunit beta (1263 aa).

It belongs to the RNA polymerase beta chain family. In terms of assembly, the RNAP catalytic core consists of 2 alpha, 1 beta, 1 beta' and 1 omega subunit. When a sigma factor is associated with the core the holoenzyme is formed, which can initiate transcription.

It carries out the reaction RNA(n) + a ribonucleoside 5'-triphosphate = RNA(n+1) + diphosphate. Its function is as follows. DNA-dependent RNA polymerase catalyzes the transcription of DNA into RNA using the four ribonucleoside triphosphates as substrates. This is DNA-directed RNA polymerase subunit beta from Thermotoga maritima (strain ATCC 43589 / DSM 3109 / JCM 10099 / NBRC 100826 / MSB8).